Consider the following 69-residue polypeptide: Conotoxin AbVIE (69 aa).

Residues V1 to A17 form the signal peptide. Residues E18–T40 constitute a propeptide that is removed on maturation. Intrachain disulfides connect C43/C57, C50/C61, and C56/C66.

Belongs to the conotoxin O1 superfamily. In terms of tissue distribution, expressed by the venom duct.

Its subcellular location is the secreted. The chain is Conotoxin AbVIE from Conus abbreviatus (Abbreviated cone).